Consider the following 284-residue polypeptide: ATP phosphoribosyltransferase (284 aa).

The protein belongs to the ATP phosphoribosyltransferase family. Long subfamily. Mg(2+) is required as a cofactor.

The protein localises to the cytoplasm. It carries out the reaction 1-(5-phospho-beta-D-ribosyl)-ATP + diphosphate = 5-phospho-alpha-D-ribose 1-diphosphate + ATP. The protein operates within amino-acid biosynthesis; L-histidine biosynthesis; L-histidine from 5-phospho-alpha-D-ribose 1-diphosphate: step 1/9. Feedback inhibited by histidine. In terms of biological role, catalyzes the condensation of ATP and 5-phosphoribose 1-diphosphate to form N'-(5'-phosphoribosyl)-ATP (PR-ATP). Has a crucial role in the pathway because the rate of histidine biosynthesis seems to be controlled primarily by regulation of HisG enzymatic activity. This is ATP phosphoribosyltransferase from Corynebacterium kroppenstedtii (strain DSM 44385 / JCM 11950 / CIP 105744 / CCUG 35717).